The following is a 181-amino-acid chain: Probable cobalt-precorrin-6B C(15)-methyltransferase (decarboxylating) (181 aa).

S-adenosyl-L-methionine-binding positions include Thr-16, 40–44 (GCGSG), Asp-61, and Ala-89.

Belongs to the methyltransferase superfamily. Archaeal-type CbiT family.

The enzyme catalyses Co-precorrin-6B + S-adenosyl-L-methionine = Co-precorrin-7 + S-adenosyl-L-homocysteine + CO2. It participates in cofactor biosynthesis; adenosylcobalamin biosynthesis; cob(II)yrinate a,c-diamide from sirohydrochlorin (anaerobic route): step 8/10. Its function is as follows. Catalyzes the methylation of C-15 in cobalt-precorrin-6B followed by the decarboxylation of C-12 to form cobalt-precorrin-7. This is Probable cobalt-precorrin-6B C(15)-methyltransferase (decarboxylating) from Methanococcus maripaludis (strain C5 / ATCC BAA-1333).